The chain runs to 315 residues: Acetyl-coenzyme A carboxylase carboxyl transferase subunit alpha (315 aa).

Residues 40–293 (LQDKSKTLTE…RAELSSQLAM (254 aa)) enclose the CoA carboxyltransferase C-terminal domain.

Belongs to the AccA family. Acetyl-CoA carboxylase is a heterohexamer composed of biotin carboxyl carrier protein (AccB), biotin carboxylase (AccC) and two subunits each of ACCase subunit alpha (AccA) and ACCase subunit beta (AccD).

It is found in the cytoplasm. The catalysed reaction is N(6)-carboxybiotinyl-L-lysyl-[protein] + acetyl-CoA = N(6)-biotinyl-L-lysyl-[protein] + malonyl-CoA. The protein operates within lipid metabolism; malonyl-CoA biosynthesis; malonyl-CoA from acetyl-CoA: step 1/1. Component of the acetyl coenzyme A carboxylase (ACC) complex. First, biotin carboxylase catalyzes the carboxylation of biotin on its carrier protein (BCCP) and then the CO(2) group is transferred by the carboxyltransferase to acetyl-CoA to form malonyl-CoA. The polypeptide is Acetyl-coenzyme A carboxylase carboxyl transferase subunit alpha (Pseudomonas fluorescens (strain Pf0-1)).